The primary structure comprises 602 residues: UvrABC system protein C (602 aa).

The GIY-YIG domain maps to 17-94 (TTSGCYKMYS…IKEYKPDYNI (78 aa)). Residues 199–234 (SKLLDETEIKMKEAIKKEDFEAAIKLKETKRSLIEI) enclose the UVR domain.

It belongs to the UvrC family. In terms of assembly, interacts with UvrB in an incision complex.

The protein localises to the cytoplasm. In terms of biological role, the UvrABC repair system catalyzes the recognition and processing of DNA lesions. UvrC both incises the 5' and 3' sides of the lesion. The N-terminal half is responsible for the 3' incision and the C-terminal half is responsible for the 5' incision. The chain is UvrABC system protein C from Borrelia hermsii (strain HS1 / DAH).